Consider the following 271-residue polypeptide: Ribose-phosphate pyrophosphokinase 2 (271 aa).

ATP-binding positions include 34–36 (DGE) and 82–83 (RQ). The Mg(2+) site is built by histidine 115 and aspartate 150. Residue lysine 173 is part of the active site. Residues arginine 175, aspartate 199, and 203–207 (STGGT) each bind D-ribose 5-phosphate.

Belongs to the ribose-phosphate pyrophosphokinase family. Class III (archaeal) subfamily. The cofactor is Mg(2+).

It is found in the cytoplasm. It carries out the reaction D-ribose 5-phosphate + ATP = 5-phospho-alpha-D-ribose 1-diphosphate + AMP + H(+). The protein operates within metabolic intermediate biosynthesis; 5-phospho-alpha-D-ribose 1-diphosphate biosynthesis; 5-phospho-alpha-D-ribose 1-diphosphate from D-ribose 5-phosphate (route I): step 1/1. Its function is as follows. Involved in the biosynthesis of the central metabolite phospho-alpha-D-ribosyl-1-pyrophosphate (PRPP) via the transfer of pyrophosphoryl group from ATP to 1-hydroxyl of ribose-5-phosphate (Rib-5-P). This is Ribose-phosphate pyrophosphokinase 2 from Archaeoglobus fulgidus (strain ATCC 49558 / DSM 4304 / JCM 9628 / NBRC 100126 / VC-16).